The chain runs to 250 residues: UDP-2,3-diacylglucosamine hydrolase (250 aa).

5 residues coordinate Mn(2+): aspartate 8, histidine 10, aspartate 41, asparagine 79, and histidine 114. Position 79 to 80 (79 to 80 (NR)) interacts with substrate. Substrate-binding residues include aspartate 122, serine 160, glutamine 167, and histidine 195. Positions 195 and 197 each coordinate Mn(2+).

The protein belongs to the LpxH family. Mn(2+) is required as a cofactor.

It localises to the cell inner membrane. It carries out the reaction UDP-2-N,3-O-bis[(3R)-3-hydroxytetradecanoyl]-alpha-D-glucosamine + H2O = 2-N,3-O-bis[(3R)-3-hydroxytetradecanoyl]-alpha-D-glucosaminyl 1-phosphate + UMP + 2 H(+). It functions in the pathway glycolipid biosynthesis; lipid IV(A) biosynthesis; lipid IV(A) from (3R)-3-hydroxytetradecanoyl-[acyl-carrier-protein] and UDP-N-acetyl-alpha-D-glucosamine: step 4/6. Functionally, hydrolyzes the pyrophosphate bond of UDP-2,3-diacylglucosamine to yield 2,3-diacylglucosamine 1-phosphate (lipid X) and UMP by catalyzing the attack of water at the alpha-P atom. Involved in the biosynthesis of lipid A, a phosphorylated glycolipid that anchors the lipopolysaccharide to the outer membrane of the cell. The chain is UDP-2,3-diacylglucosamine hydrolase from Nitrosococcus oceani (strain ATCC 19707 / BCRC 17464 / JCM 30415 / NCIMB 11848 / C-107).